A 206-amino-acid polypeptide reads, in one-letter code: MCFQFSILYTCYLAHFGVFPRKYLVMAGIEAKFQQNPPLGTHKLFLGAHICLRILTVTATLTAAWMMITSKQTVEVYGIQVEAKYSYSSAFKFFSYANAIACGCSVLTLFPAFSLFYRGSTPMKFFFLFLHDLCMMSLVLAGCAAATAIGYVGRYGNNHAGWMAICDQFDEYCNRIRLSLMFSYLAFVFILMLTIMSANKSREIRV.

Over 1–43 (MCFQFSILYTCYLAHFGVFPRKYLVMAGIEAKFQQNPPLGTHK) the chain is Cytoplasmic. The helical transmembrane segment at 44-64 (LFLGAHICLRILTVTATLTAA) threads the bilayer. Residues 65–92 (WMMITSKQTVEVYGIQVEAKYSYSSAFK) are Extracellular-facing. The helical transmembrane segment at 93 to 113 (FFSYANAIACGCSVLTLFPAF) threads the bilayer. The Cytoplasmic portion of the chain corresponds to 114 to 124 (SLFYRGSTPMK). A helical transmembrane segment spans residues 125–145 (FFFLFLHDLCMMSLVLAGCAA). Residues 146 to 177 (ATAIGYVGRYGNNHAGWMAICDQFDEYCNRIR) are Extracellular-facing. The helical transmembrane segment at 178–198 (LSLMFSYLAFVFILMLTIMSA) threads the bilayer. The Cytoplasmic segment spans residues 199-206 (NKSREIRV).

Belongs to the Casparian strip membrane proteins (CASP) family. As to quaternary structure, homodimer and heterodimers.

It is found in the cell membrane. The chain is CASP-like protein 1F1 from Vitis vinifera (Grape).